The following is a 475-amino-acid chain: Protein EARLY HEADING DATE 2 (475 aa).

Residues 1–16 show a composition bias toward polar residues; it reads MLLSDLSSDQEATGSN. The segment at 1–26 is disordered; sequence MLLSDLSSDQEATGSNSHGGGGGDRM. 2 C2H2-type zinc fingers span residues 105 to 127 and 155 to 185; these read FVCE…RRGH and YVCP…SRKH. 2 consecutive short sequence motifs (nuclear localization signal) follow at residues 123–130 and 177–184; these read HRRGHNLP and IKKHFSRK. The C2H2-type 2; degenerate zinc-finger motif lies at 190–213; sequence WRCERCGKRYAVHSDWKAHVKNCG. Residues Cys-192, Cys-195, His-208, Cys-212, Cys-219, Cys-221, His-234, and Cys-238 each contribute to the Zn(2+) site. The CCHC-type 2; atypical zinc finger occupies 217–240; that stretch reads YRCDCGILFSRKDSLLTHRAFCDA. The tract at residues 227-239 is SHR-binding; that stretch reads RKDSLLTHRAFCD.

Mostly expressed in developing leaves (more in sheaths than in blades, especially in the outer epidermal cell of immature leaves and in the region immediately beneath the meristem where internodes are visible) and panicles, and, at very low levels, around the shoot apex and in roots.

It is found in the nucleus. In terms of biological role, transcription activator that acts as a flowering master switch in both long and short days, independently of the circadian clock. Promotes flowering upstream of HD1 by up-regulating FTL1, FTL4, FTL5, FTL6, EHD1, HD3A and RFT1. Seems to repress FTL11 expression. May recognize the consensus motif 5'-TTTGTCGTAAT-3' in target gene promoters. The polypeptide is Protein EARLY HEADING DATE 2 (Oryza sativa subsp. japonica (Rice)).